The primary structure comprises 124 residues: Small ribosomal subunit protein uS12 (124 aa).

The segment at 1–22 (MATVNQLVRKPRQKPDAKSNVA) is disordered. D89 carries the post-translational modification 3-methylthioaspartic acid.

The protein belongs to the universal ribosomal protein uS12 family. Part of the 30S ribosomal subunit. Contacts proteins S8 and S17. May interact with IF1 in the 30S initiation complex.

Its function is as follows. With S4 and S5 plays an important role in translational accuracy. In terms of biological role, interacts with and stabilizes bases of the 16S rRNA that are involved in tRNA selection in the A site and with the mRNA backbone. Located at the interface of the 30S and 50S subunits, it traverses the body of the 30S subunit contacting proteins on the other side and probably holding the rRNA structure together. The combined cluster of proteins S8, S12 and S17 appears to hold together the shoulder and platform of the 30S subunit. This Pseudoalteromonas atlantica (strain T6c / ATCC BAA-1087) protein is Small ribosomal subunit protein uS12.